The sequence spans 730 residues: Procollagen-lysine,2-oxoglutarate 5-dioxygenase 1 (730 aa).

Residues 1–20 (MVPPAVLLPWVVLPLLGVQG) form the signal peptide. Residues N200, N403, and N541 are each glycosylated (N-linked (GlcNAc...) asparagine). Positions 639–730 (QFELAFVVRY…RYIAVSFIDP (92 aa)) constitute a Fe2OG dioxygenase domain. Fe cation contacts are provided by H659 and D661. N-linked (GlcNAc...) asparagine glycosylation is present at N689. H711 is a Fe cation binding site. Residue R721 is part of the active site.

Homodimer. Fe(2+) serves as cofactor. Requires L-ascorbate as cofactor.

Its subcellular location is the rough endoplasmic reticulum membrane. It carries out the reaction L-lysyl-[collagen] + 2-oxoglutarate + O2 = (5R)-5-hydroxy-L-lysyl-[collagen] + succinate + CO2. Its function is as follows. Forms hydroxylysine residues in -Xaa-Lys-Gly- sequences in collagens. These hydroxylysines serve as sites of attachment for carbohydrate units and are essential for the stability of the intermolecular collagen cross-links. This Gallus gallus (Chicken) protein is Procollagen-lysine,2-oxoglutarate 5-dioxygenase 1 (PLOD1).